The following is a 379-amino-acid chain: Succinyl-diaminopimelate desuccinylase (379 aa).

His-70 contributes to the Zn(2+) binding site. Asp-72 is an active-site residue. Residue Asp-103 participates in Zn(2+) binding. Glu-137 functions as the Proton acceptor in the catalytic mechanism. The Zn(2+) site is built by Glu-138, Glu-166, and His-352.

Belongs to the peptidase M20A family. DapE subfamily. Homodimer. Zn(2+) is required as a cofactor. Requires Co(2+) as cofactor.

It carries out the reaction N-succinyl-(2S,6S)-2,6-diaminopimelate + H2O = (2S,6S)-2,6-diaminopimelate + succinate. It functions in the pathway amino-acid biosynthesis; L-lysine biosynthesis via DAP pathway; LL-2,6-diaminopimelate from (S)-tetrahydrodipicolinate (succinylase route): step 3/3. Its function is as follows. Catalyzes the hydrolysis of N-succinyl-L,L-diaminopimelic acid (SDAP), forming succinate and LL-2,6-diaminopimelate (DAP), an intermediate involved in the bacterial biosynthesis of lysine and meso-diaminopimelic acid, an essential component of bacterial cell walls. In Burkholderia multivorans (strain ATCC 17616 / 249), this protein is Succinyl-diaminopimelate desuccinylase.